Here is a 418-residue protein sequence, read N- to C-terminus: Probable cysteine desulfurase 2 (418 aa).

At Lys234 the chain carries N6-(pyridoxal phosphate)lysine. Residue Cys374 is the Cysteine persulfide intermediate of the active site.

Belongs to the class-V pyridoxal-phosphate-dependent aminotransferase family. Csd subfamily. Requires pyridoxal 5'-phosphate as cofactor.

The enzyme catalyses (sulfur carrier)-H + L-cysteine = (sulfur carrier)-SH + L-alanine. Its function is as follows. Catalyzes the removal of elemental sulfur and selenium atoms from L-cysteine, L-cystine, L-selenocysteine, and L-selenocystine to produce L-alanine. The protein is Probable cysteine desulfurase 2 (csd2) of Mycobacterium leprae (strain TN).